The primary structure comprises 64 residues: Large ribosomal subunit protein bL33c (64 aa).

Belongs to the bacterial ribosomal protein bL33 family.

The protein localises to the plastid. Its subcellular location is the chloroplast. This is Large ribosomal subunit protein bL33c from Thalassiosira pseudonana (Marine diatom).